The chain runs to 51 residues: Large ribosomal subunit protein eL39 (51 aa).

Belongs to the eukaryotic ribosomal protein eL39 family.

This Aeropyrum pernix (strain ATCC 700893 / DSM 11879 / JCM 9820 / NBRC 100138 / K1) protein is Large ribosomal subunit protein eL39 (rpl39e).